A 127-amino-acid polypeptide reads, in one-letter code: Aspartate 1-decarboxylase (127 aa).

The active-site Schiff-base intermediate with substrate; via pyruvic acid is Ser-25. Ser-25 is subject to Pyruvic acid (Ser). Thr-57 is a binding site for substrate. The active-site Proton donor is Tyr-58. 73 to 75 (GAA) contributes to the substrate binding site.

This sequence belongs to the PanD family. Heterooctamer of four alpha and four beta subunits. Requires pyruvate as cofactor. Is synthesized initially as an inactive proenzyme, which is activated by self-cleavage at a specific serine bond to produce a beta-subunit with a hydroxyl group at its C-terminus and an alpha-subunit with a pyruvoyl group at its N-terminus.

Its subcellular location is the cytoplasm. It catalyses the reaction L-aspartate + H(+) = beta-alanine + CO2. The protein operates within cofactor biosynthesis; (R)-pantothenate biosynthesis; beta-alanine from L-aspartate: step 1/1. In terms of biological role, catalyzes the pyruvoyl-dependent decarboxylation of aspartate to produce beta-alanine. The protein is Aspartate 1-decarboxylase of Clostridium botulinum (strain Loch Maree / Type A3).